Here is a 367-residue protein sequence, read N- to C-terminus: Putative S-adenosyl-L-methionine-dependent methyltransferase MT0751 (367 aa).

S-adenosyl-L-methionine-binding positions include Asp137 and 166 to 167; that span reads DL. Residues 348-358 are compositionally biased toward polar residues; the sequence is TRSDAHQASTT. A disordered region spans residues 348-367; that stretch reads TRSDAHQASTTAPPPPGLTG.

Belongs to the UPF0677 family.

In terms of biological role, exhibits S-adenosyl-L-methionine-dependent methyltransferase activity. The polypeptide is Putative S-adenosyl-L-methionine-dependent methyltransferase MT0751 (Mycobacterium tuberculosis (strain CDC 1551 / Oshkosh)).